Reading from the N-terminus, the 122-residue chain is HLLKFNKMIKFETRKNAIPFYAFYGCYCGWGGRXXXXXXXXXCCFVHDCCYGKXXXXXXXWDLYRYSLKSGYLTCGKGTWCEEQICECDRVAAECLRRSLSTYKYGYMFYPDSRCRGPSETC.

Intrachain disulfides connect cysteine 26–cysteine 115, cysteine 28–cysteine 44, cysteine 43–cysteine 95, cysteine 49–cysteine 122, cysteine 50–cysteine 88, and cysteine 75–cysteine 86. Residues tyrosine 27, glycine 29, and glycine 31 each coordinate Ca(2+). Histidine 47 is an active-site residue. Aspartate 48 is a Ca(2+) binding site. Aspartate 89 is a catalytic residue.

Monomer. It depends on Ca(2+) as a cofactor. Expressed by the venom gland.

It is found in the secreted. The enzyme catalyses a 1,2-diacyl-sn-glycero-3-phosphocholine + H2O = a 1-acyl-sn-glycero-3-phosphocholine + a fatty acid + H(+). Its activity is regulated as follows. Inhibited by Mn(2+), Mg(2+), Zn(2+) and Cu(2+). Its function is as follows. Snake venom phospholipase A2 (PLA2) that displays neurotoxic and myotoxic activities. Induces inflammatory edema by mechanisms involving mast cell activation and arachidonic acid metabolites. Increases plasma creatine kinase activity. PLA2 catalyzes the calcium-dependent hydrolysis of the 2-acyl groups in 3-sn-phosphoglycerides. The sequence is that of Basic phospholipase A2 LmTX-I from Lachesis muta muta (Bushmaster).